The sequence spans 248 residues: Cyclin-Q (248 aa).

Position 1 is an N-acetylmethionine (methionine 1). Residues 1-12 are compositionally biased toward gly residues; sequence MEAPEGGGGGPA. The disordered stretch occupies residues 1–21; it reads MEAPEGGGGGPAARGPEGQPA.

Belongs to the cyclin family. Cyclin-like FAM58 subfamily. Associates with CDK10 to promote its kinase activity. Interacts with SALL1.

Its function is as follows. Activating cyclin for the cyclin-associated kinase CDK10. This Homo sapiens (Human) protein is Cyclin-Q.